Reading from the N-terminus, the 541-residue chain is Berberine bridge enzyme-like 1 (541 aa).

Residues 1-20 (MKLSCLVFLIVSSLVSSSLA) form the signal peptide. Residues Asn-25, Asn-38, Asn-73, Asn-136, Asn-302, Asn-339, and Asn-357 are each glycosylated (N-linked (GlcNAc...) asparagine). Cysteines 35 and 98 form a disulfide. In terms of domain architecture, FAD-binding PCMH-type spans 76–255 (TSPKPLLVIA…LSFKIKLVPV (180 aa)). The 6-(S-cysteinyl)-8alpha-(pros-histidyl)-FAD (His-Cys) cross-link spans 113–180 (HDYDGVSYIS…GTHGFPAGVC (68 aa)).

Belongs to the oxygen-dependent FAD-linked oxidoreductase family. It depends on FAD as a cofactor. The FAD cofactor is bound via a bicovalent 6-S-cysteinyl, 8alpha-N1-histidyl FAD linkage. In terms of tissue distribution, accumulates in cell walls of etiolated hypocotyls.

The protein resides in the secreted. It localises to the cell wall. The chain is Berberine bridge enzyme-like 1 from Arabidopsis thaliana (Mouse-ear cress).